The chain runs to 340 residues: MLDPRARTLLKTLIERYIADGQPVGSRTLSRYSGLELSPATIRNVMSDLEELGLVSSPHTSAGRIPTPRGYRLFVDTMLTVEAPIDAEAVARQVQNTLQAGEPQQRVVAAAASVLSNLSQFAGVVLTPRRSHVFKQIEFMRLSDKRILLIIVTPEGDVQNRMLATPRDYSPSQLTEASNYINAHFAGLSFDEVRRRLRDEIDQLRGDMTTLMHAAVTASTEVPDTEDTVLISGERNLLEVADLSSDMARLRKLFDVFDQKTGLLQLLDVSSHAQGVQIFIGGESTLVPIEEMSVVTAPYEVNGKIVGTLGVIGPTRMAYNRVIPIVDITARLLSLTLSQQ.

It belongs to the HrcA family.

Functionally, negative regulator of class I heat shock genes (grpE-dnaK-dnaJ and groELS operons). Prevents heat-shock induction of these operons. This chain is Heat-inducible transcription repressor HrcA, found in Burkholderia cenocepacia (strain ATCC BAA-245 / DSM 16553 / LMG 16656 / NCTC 13227 / J2315 / CF5610) (Burkholderia cepacia (strain J2315)).